Here is a 167-residue protein sequence, read N- to C-terminus: Small ribosomal subunit protein uS5 (167 aa).

One can recognise an S5 DRBM domain in the interval 12–75 (LQEKLITVNR…EQARRNMITI (64 aa)).

It belongs to the universal ribosomal protein uS5 family. Part of the 30S ribosomal subunit. Contacts proteins S4 and S8.

Functionally, with S4 and S12 plays an important role in translational accuracy. Located at the back of the 30S subunit body where it stabilizes the conformation of the head with respect to the body. This Buchnera aphidicola subsp. Acyrthosiphon pisum (strain APS) (Acyrthosiphon pisum symbiotic bacterium) protein is Small ribosomal subunit protein uS5.